The primary structure comprises 557 residues: Warthog protein 4 (557 aa).

The signal sequence occupies residues 1 to 20 (MRFSLLALVLLSSSYKFTYG). The tract at residues 272-308 (QETNPQPPPPPGQQGGFVQPQGFQPQGGFQPQGFQPQ) is disordered. Over residues 287–308 (GFVQPQGFQPQGGFQPQGFQPQ) the composition is skewed to low complexity.

Belongs to the hedgehog family. The C-terminal domain displays an autoproteolysis activity.

The protein localises to the secreted. Its subcellular location is the cell surface. The protein resides in the cell membrane. It is found in the extracellular space. Intercellular signal essential for a variety of patterning events during development. The protein is Warthog protein 4 (wrt-4) of Caenorhabditis elegans.